The chain runs to 108 residues: Parvalbumin alpha (108 aa).

Alanine 1 bears the N-acetylalanine mark. EF-hand domains are found at residues 37 to 72 and 76 to 108; these read MSAN…FAAD and LTDA…VHEA. Ca(2+)-binding residues include aspartate 50, aspartate 52, serine 54, phenylalanine 56, glutamate 58, glutamate 61, aspartate 89, aspartate 91, aspartate 93, lysine 95, and glutamate 100.

The protein belongs to the parvalbumin family.

Its function is as follows. In muscle, parvalbumin is thought to be involved in relaxation after contraction. It binds two calcium ions. This chain is Parvalbumin alpha, found in Esox lucius (Northern pike).